A 128-amino-acid polypeptide reads, in one-letter code: Large ribosomal subunit protein mL51 (128 aa).

The N-terminal 31 residues, 1-31, are a transit peptide targeting the mitochondrion; sequence MAGSLSWVAGRRLWGLVPLACRSFFLGVPRL.

Belongs to the mitochondrion-specific ribosomal protein mL51 family. As to quaternary structure, component of the mitochondrial ribosome large subunit (39S) which comprises a 16S rRNA and about 50 distinct proteins. Interacts with OXA1L.

Its subcellular location is the mitochondrion. This chain is Large ribosomal subunit protein mL51 (MRPL51), found in Bos taurus (Bovine).